Consider the following 254-residue polypeptide: Dihydroorotate dehydrogenase B (NAD(+)), electron transfer subunit (254 aa).

The FAD-binding FR-type domain maps to Met1 to Ile99. FAD is bound by residues Arg50–Ser53, Leu67–Arg69, and Gly74–Thr75. [2Fe-2S] cluster-binding residues include Cys218, Cys223, Cys226, and Cys241.

The protein belongs to the PyrK family. As to quaternary structure, heterotetramer of 2 PyrK and 2 PyrD type B subunits. [2Fe-2S] cluster is required as a cofactor. Requires FAD as cofactor.

It functions in the pathway pyrimidine metabolism; UMP biosynthesis via de novo pathway; orotate from (S)-dihydroorotate (NAD(+) route): step 1/1. Functionally, responsible for channeling the electrons from the oxidation of dihydroorotate from the FMN redox center in the PyrD type B subunit to the ultimate electron acceptor NAD(+). The protein is Dihydroorotate dehydrogenase B (NAD(+)), electron transfer subunit of Listeria monocytogenes serotype 4b (strain F2365).